A 152-amino-acid chain; its full sequence is Small ribosomal subunit protein uS8m (152 aa).

The protein belongs to the universal ribosomal protein uS8 family.

It is found in the mitochondrion. This Dictyostelium citrinum (Slime mold) protein is Small ribosomal subunit protein uS8m (mrps8).